A 517-amino-acid polypeptide reads, in one-letter code: Crotonobetaine/carnitine--CoA ligase (517 aa).

It belongs to the ATP-dependent AMP-binding enzyme family.

It catalyses the reaction 4-(trimethylamino)butanoate + ATP + CoA = 4-(trimethylamino)butanoyl-CoA + AMP + diphosphate. The enzyme catalyses crotonobetaine + ATP + CoA = crotonobetainyl-CoA + AMP + diphosphate. The catalysed reaction is (R)-carnitine + ATP + CoA = (R)-carnitinyl-CoA + AMP + diphosphate. Its pathway is amine and polyamine metabolism; carnitine metabolism. Functionally, catalyzes the transfer of CoA to carnitine, generating the initial carnitinyl-CoA needed for the CaiB reaction cycle. Also has activity toward crotonobetaine and gamma-butyrobetaine. This Salmonella enteritidis PT4 (strain P125109) protein is Crotonobetaine/carnitine--CoA ligase.